A 627-amino-acid chain; its full sequence is DNA topoisomerase 4 subunit B (627 aa).

Residues Tyr-4, Asn-41, Asp-68, 109–115 (GLHGVGV), and Lys-333 each bind ATP. Residues 412-525 (TELFIVEGDS…NGHIYIAQPP (114 aa)) form the Toprim domain. Mg(2+) is bound by residues Glu-418, Asp-490, and Asp-492.

This sequence belongs to the type II topoisomerase family. ParE type 1 subfamily. In terms of assembly, heterotetramer composed of ParC and ParE. Requires Mg(2+) as cofactor. Mn(2+) is required as a cofactor. Ca(2+) serves as cofactor.

It carries out the reaction ATP-dependent breakage, passage and rejoining of double-stranded DNA.. Its activity is regulated as follows. Pyrrolopyrimidines inhibit both GyrB and its paralog in topoisomerase IV (parE). Functionally, topoisomerase IV is essential for chromosome segregation. It relaxes supercoiled DNA. Performs the decatenation events required during the replication of a circular DNA molecule. This Francisella tularensis subsp. holarctica (strain LVS) protein is DNA topoisomerase 4 subunit B.